Reading from the N-terminus, the 320-residue chain is NAD-dependent protein deacylase SIR2rp2 (320 aa).

The transit peptide at 1-22 directs the protein to the mitochondrion; sequence MRPAGTLASFLERCSARKRGRG. In terms of domain architecture, Deacetylase sirtuin-type spans 23-320; that stretch reads CVVLTGAGCS…MFFRRKTIQL (298 aa). Residues 28–48 and 108–111 contribute to the NAD(+) site; these read GAGCSTESGIPDYRGPNGQYH and QNVD. Residue H144 is the Proton acceptor of the active site. Zn(2+) is bound by residues C152, C155, C207, and C210. Residues 248–250, 274–276, and G294 contribute to the NAD(+) site; these read GTS and NAG.

Belongs to the sirtuin family. Class II subfamily. Requires Zn(2+) as cofactor.

It is found in the mitochondrion matrix. The enzyme catalyses N(6)-acetyl-L-lysyl-[protein] + NAD(+) + H2O = 2''-O-acetyl-ADP-D-ribose + nicotinamide + L-lysyl-[protein]. Its function is as follows. NAD-dependent protein deacylase. Catalyzes the NAD-dependent hydrolysis of acyl groups from lysine residues. The sequence is that of NAD-dependent protein deacylase SIR2rp2 (SIR2rp2) from Leishmania major.